The following is a 287-amino-acid chain: Cbb3-type cytochrome c oxidase subunit FixPc (287 aa).

The Cytoplasmic segment spans residues 1-36; it reads MSEKHIDEFSGVETTGHEWDGIRELNNPMPRWWVWT. The helical transmembrane segment at 37-57 threads the bilayer; the sequence is FYATIVWALGYAIAYPAIPMI. Residues 58–287 are Periplasmic-facing; that stretch reads TDATKGMLGF…IFVHSLGGGT (230 aa). Cytochrome c domains lie at 108 to 196 and 203 to 284; these read FAIA…WGLT and GLAE…HSLG. Residues C121, C124, H125, M173, C216, C219, H220, and M261 each contribute to the heme c site.

The protein belongs to the CcoP / FixP family. Component of the cbb3-type cytochrome c oxidase at least composed of FixN, FixO, FixQ and FixP. Heme c serves as cofactor.

Its subcellular location is the cell inner membrane. It functions in the pathway energy metabolism; oxidative phosphorylation. Functionally, C-type cytochrome. Part of the cbb3-type cytochrome c oxidase complex. FixP subunit is required for transferring electrons from donor cytochrome c via its heme groups to FixO subunit. From there, electrons are shuttled to the catalytic binuclear center of FixN subunit where oxygen reduction takes place. The complex also functions as a proton pump. In Rhizobium leguminosarum bv. viciae, this protein is Cbb3-type cytochrome c oxidase subunit FixPc.